The chain runs to 427 residues: Protein TIFY 6a (427 aa).

Over residues 1–25 (MERDFLGAIGRKEEAAGKPEEHSDY) the composition is skewed to basic and acidic residues. Residues 1–33 (MERDFLGAIGRKEEAAGKPEEHSDYRGGGGGAS) form a disordered region. The 36-residue stretch at 196 to 231 (QNPKVTQMTIFYDGLVNVFDNIPVEKAQELMLLASR) folds into the Tify domain. Polar residues-rich tracts occupy residues 293–303 (LPKSSSSSNDS) and 317–327 (PLSQASPSQPI). The tract at residues 293–327 (LPKSSSSSNDSAGPKSGGLPLAVTPLSQASPSQPI) is disordered. Positions 343–367 (PQARKASLARFLEKRKERVSSVAPY) match the Jas motif. The Nuclear localization signal signature appears at 345-352 (ARKASLAR). The segment at 360–427 (RVSSVAPYPS…QEPPSTKLQI (68 aa)) is disordered. Polar residues-rich tracts occupy residues 369–402 (SSKS…NNCE) and 411–427 (RNIS…KLQI).

This sequence belongs to the TIFY/JAZ family. Post-translationally, ubiquitinated.

The protein localises to the nucleus. Functionally, repressor of jasmonate responses. In Oryza sativa subsp. indica (Rice), this protein is Protein TIFY 6a.